We begin with the raw amino-acid sequence, 102 residues long: Large ribosomal subunit protein bL21 (102 aa).

Belongs to the bacterial ribosomal protein bL21 family. As to quaternary structure, part of the 50S ribosomal subunit. Contacts protein L20.

Functionally, this protein binds to 23S rRNA in the presence of protein L20. The chain is Large ribosomal subunit protein bL21 from Solidesulfovibrio magneticus (strain ATCC 700980 / DSM 13731 / RS-1) (Desulfovibrio magneticus).